The following is a 196-amino-acid chain: MIASVRGEVIDIALDHAVIEAAGVGYKVMATPSTLATLRRGTESRLVTAMIVREDSMTLYGFADADARDLFGTLLGVSGVGPKIALATLAVYDAPTLRQALADGDVTALTRVPGIGKRGAERMVLELRDKIGPVTTGAGVTAVGGHAVRGPVVEALVGLGFAAKQAEEACDKVLAADPDATTSSALRAALSMLGKK.

Positions 1 to 63 (MIASVRGEVI…EDSMTLYGFA (63 aa)) are domain I. The tract at residues 64 to 142 (DADARDLFGT…PVTTGAGVTA (79 aa)) is domain II. The segment at 143-151 (VGGHAVRGP) is flexible linker. Residues 151 to 196 (PVVEALVGLGFAAKQAEEACDKVLAADPDATTSSALRAALSMLGKK) form a domain III region.

Belongs to the RuvA family. Homotetramer. Forms an RuvA(8)-RuvB(12)-Holliday junction (HJ) complex. HJ DNA is sandwiched between 2 RuvA tetramers; dsDNA enters through RuvA and exits via RuvB. An RuvB hexamer assembles on each DNA strand where it exits the tetramer. Each RuvB hexamer is contacted by two RuvA subunits (via domain III) on 2 adjacent RuvB subunits; this complex drives branch migration. In the full resolvosome a probable DNA-RuvA(4)-RuvB(12)-RuvC(2) complex forms which resolves the HJ.

The protein localises to the cytoplasm. In terms of biological role, the RuvA-RuvB-RuvC complex processes Holliday junction (HJ) DNA during genetic recombination and DNA repair, while the RuvA-RuvB complex plays an important role in the rescue of blocked DNA replication forks via replication fork reversal (RFR). RuvA specifically binds to HJ cruciform DNA, conferring on it an open structure. The RuvB hexamer acts as an ATP-dependent pump, pulling dsDNA into and through the RuvAB complex. HJ branch migration allows RuvC to scan DNA until it finds its consensus sequence, where it cleaves and resolves the cruciform DNA. This chain is Holliday junction branch migration complex subunit RuvA, found in Mycobacterium sp. (strain JLS).